The sequence spans 377 residues: Probable O-methyltransferase 3 (377 aa).

D241 is a binding site for S-adenosyl-L-methionine. The active-site Proton acceptor is H279.

Belongs to the class I-like SAM-binding methyltransferase superfamily. Cation-independent O-methyltransferase family. Highly expressed in lupulin glands. Detected in early-, mid- and late-stage cones.

This is Probable O-methyltransferase 3 from Humulus lupulus (European hop).